We begin with the raw amino-acid sequence, 515 residues long: Glucose-6-phosphate 1-dehydrogenase (515 aa).

An N-acetylalanine modification is found at Ala2. Residue Ser8 is modified to Phosphoserine. At Thr10 the chain carries Phosphothreonine. NADP(+) is bound by residues 38 to 45 (GASGDLAK) and Arg72. At Lys89 the chain carries N6-acetyllysine. NADP(+) is bound by residues Tyr147 and Lys171. D-glucose 6-phosphate is bound by residues Lys171, 201-205 (HYLGK), Glu239, and Asp258. An N6-(2-hydroxyisobutyryl)lysine; alternate modification is found at Lys171. An N6-acetyllysine; alternate modification is found at Lys171. The active-site Proton acceptor is the His263. NADP(+) is bound at residue Arg357. D-glucose 6-phosphate-binding residues include Lys360 and Arg365. Residues Lys366, Arg370, and Arg393 each coordinate NADP(+). Gln395 provides a ligand contact to D-glucose 6-phosphate. Residues 401-403 (YTK) and 421-423 (DLT) contribute to the NADP(+) site. Lys403 is subject to N6-acetyllysine. The residue at position 432 (Lys432) is an N6-acetyllysine. Position 487 (Arg487) interacts with NADP(+). Lys497 is modified (N6-acetyllysine). Residues Tyr503 and Trp509 each coordinate NADP(+). Tyr503 carries the phosphotyrosine modification.

It belongs to the glucose-6-phosphate dehydrogenase family. In terms of assembly, homotetramer; dimer of dimers. Interacts with SIRT2; the interaction is enhanced by H(2)O(2) treatment. Forms a ternary complex with ALDOB and TP53; this interaction is direct. ALDOB stabilizes the complex inhibiting G6PD activity and keeping oxidative pentose phosphate metabolism in check. Acetylated by ELP3 at Lys-403; acetylation inhibits its homodimerization and enzyme activity. Deacetylated by SIRT2 at Lys-403; deacetylation stimulates its enzyme activity.

The protein resides in the cytoplasm. The protein localises to the cytosol. Its subcellular location is the membrane. The catalysed reaction is D-glucose 6-phosphate + NADP(+) = 6-phospho-D-glucono-1,5-lactone + NADPH + H(+). It functions in the pathway carbohydrate degradation; pentose phosphate pathway; D-ribulose 5-phosphate from D-glucose 6-phosphate (oxidative stage): step 1/3. Its function is as follows. Cytosolic glucose-6-phosphate dehydrogenase that catalyzes the first and rate-limiting step of the oxidative branch within the pentose phosphate pathway/shunt, an alternative route to glycolysis for the dissimilation of carbohydrates and a major source of reducing power and metabolic intermediates for fatty acid and nucleic acid biosynthetic processes. The polypeptide is Glucose-6-phosphate 1-dehydrogenase (G6pdx) (Rattus norvegicus (Rat)).